The primary structure comprises 467 residues: Serine/threonine-protein phosphatase 2A 56 kDa regulatory subunit epsilon isoform (467 aa).

The tract at residues 1–40 (MSSAPTTPPSVDKVDGFSRKSVRKARQKRSQSSSQFRSQG) is disordered. Serine 2 carries the N-acetylserine modification. Threonine 7 carries the post-translational modification Phosphothreonine. Residues 20 to 29 (KSVRKARQKR) are compositionally biased toward basic residues. Serine 30, serine 32, and serine 34 each carry phosphoserine. Low complexity predominate over residues 30–40 (SQSSSQFRSQG).

Belongs to the phosphatase 2A regulatory subunit B56 family. Found in a complex with at least ARL2, PPP2CB; PPP2R1A, PPP2R2A, PPP2R5E and TBCD. PP2A consists of a common heterodimeric core enzyme, composed of a 36 kDa catalytic subunit (subunit C) and a 65 kDa constant regulatory subunit (PR65 or subunit A), that associates with a variety of regulatory subunits. Proteins that associate with the core dimer include three families of regulatory subunits B (the R2/B/PR55/B55, R3/B''/PR72/PR130/PR59 and R5/B'/B56 families), the 48 kDa variable regulatory subunit, viral proteins, and cell signaling molecules. Interacts with SGO1. Post-translationally, phosphorylated on serine residues.

The protein localises to the cytoplasm. In terms of biological role, the B regulatory subunit might modulate substrate selectivity and catalytic activity, and might also direct the localization of the catalytic enzyme to a particular subcellular compartment. The polypeptide is Serine/threonine-protein phosphatase 2A 56 kDa regulatory subunit epsilon isoform (PPP2R5E) (Homo sapiens (Human)).